The sequence spans 272 residues: Methylesterase 8 (272 aa).

Catalysis depends on S102, which acts as the Acyl-ester intermediate. Active-site charge relay system residues include D222 and H250.

It belongs to the AB hydrolase superfamily. Methylesterase family.

In terms of biological role, methylesterase shown to have carboxylesterase activity in vitro. This Arabidopsis thaliana (Mouse-ear cress) protein is Methylesterase 8.